A 113-amino-acid chain; its full sequence is Iron-sulfur cluster insertion protein ErpA (113 aa).

Iron-sulfur cluster contacts are provided by Cys41, Cys105, and Cys107.

The protein belongs to the HesB/IscA family. As to quaternary structure, homodimer. Iron-sulfur cluster is required as a cofactor.

Its function is as follows. Required for insertion of 4Fe-4S clusters for at least IspG. This Photobacterium profundum (strain SS9) protein is Iron-sulfur cluster insertion protein ErpA.